A 625-amino-acid polypeptide reads, in one-letter code: Probable inactive receptor kinase At5g16590 (625 aa).

An N-terminal signal peptide occupies residues 1 to 23 (MKNKTNLGLSVFFFFICLVSVTS). 5 LRR repeats span residues 88–111 (KLET…ANLT), 112–134 (LLRY…LFTL), 136–158 (NIIR…VNSA), 160–182 (RLAT…KIKL), and 183–204 (QQFN…SGMP). The helical transmembrane segment at 246 to 266 (AIVGIVIGCFVLLLVLFLIVF) threads the bilayer. In terms of domain architecture, Protein kinase spans 343–613 (KASAEVLGKG…PEVTRLIEEV (271 aa)). Phosphoserine is present on S345. ATP-binding positions include 349-357 (LGKGTFGSS) and K371. Phosphoserine is present on S422. 2 positions are modified to phosphothreonine: T442 and T496. Residue S517 is modified to Phosphoserine. Position 593 is a phosphothreonine (T593). Phosphoserine is present on residues S619 and S624.

The protein belongs to the protein kinase superfamily. Ser/Thr protein kinase family.

The protein resides in the cell membrane. Its function is as follows. Might be involved in early recognition of growth promoting fungi. Appears to be specific for P.indica. This Arabidopsis thaliana (Mouse-ear cress) protein is Probable inactive receptor kinase At5g16590.